The sequence spans 144 residues: Transcriptional regulator SlyA (144 aa).

The HTH marR-type domain occupies Glu2–His135. The segment at residues Gln49–Asp72 is a DNA-binding region (H-T-H motif).

This sequence belongs to the SlyA family. As to quaternary structure, homodimer.

The protein resides in the cytoplasm. Functionally, transcription regulator that can specifically activate or repress expression of target genes. Required for virulence and survival in the macrophage environment. Probably activates the transcription of ssrB. Independently of ssrB activation, capable of stimulating the expression of virulence genes found on pathogenicity island 2 (SPI2). Probably activates expression of ispA, xseB genes, and of omp operon. This chain is Transcriptional regulator SlyA, found in Salmonella typhimurium (strain LT2 / SGSC1412 / ATCC 700720).